Here is a 296-residue protein sequence, read N- to C-terminus: DNA-3-methyladenine glycosylase (296 aa).

Ser-110 is modified (phosphoserine). Asp-209 (proton acceptor) is an active-site residue.

It belongs to the alkylbase DNA glycosidase AlkA family.

It is found in the nucleus. The enzyme catalyses Hydrolysis of alkylated DNA, releasing 3-methyladenine, 3-methylguanine, 7-methylguanine and 7-methyladenine.. Functionally, hydrolysis of the deoxyribose N-glycosidic bond to excise 3-methyladenine or 7-methyladenine from the damaged DNA polymer formed by alkylation lesions. This chain is DNA-3-methyladenine glycosylase (MAG1), found in Saccharomyces cerevisiae (strain ATCC 204508 / S288c) (Baker's yeast).